The sequence spans 175 residues: uncharacterized protein (175 aa).

This is an uncharacterized protein from Treponema pallidum (strain Nichols).